Reading from the N-terminus, the 164-residue chain is Protein SprT (164 aa).

Residues 13–156 (YQQAEAFFKR…LCKRCREILV (144 aa)) enclose the SprT-like domain. Residue histidine 69 participates in Zn(2+) binding. Glutamate 70 is an active-site residue. Zn(2+) is bound at residue histidine 73.

It belongs to the SprT family. It depends on Zn(2+) as a cofactor.

The protein resides in the cytoplasm. This is Protein SprT from Pseudomonas putida (strain ATCC 700007 / DSM 6899 / JCM 31910 / BCRC 17059 / LMG 24140 / F1).